A 691-amino-acid polypeptide reads, in one-letter code: DNA ligase (691 aa).

NAD(+) contacts are provided by residues 36-40 (DAEYD), 85-86 (SL), and E118. The N6-AMP-lysine intermediate role is filled by K120. NAD(+) is bound by residues R141, E178, K295, and K319. The Zn(2+) site is built by C413, C416, C431, and C437. Positions 595–684 (GRPQPLAGQT…ESASSEDAQP (90 aa)) constitute a BRCT domain.

It belongs to the NAD-dependent DNA ligase family. LigA subfamily. Mg(2+) is required as a cofactor. The cofactor is Mn(2+).

It catalyses the reaction NAD(+) + (deoxyribonucleotide)n-3'-hydroxyl + 5'-phospho-(deoxyribonucleotide)m = (deoxyribonucleotide)n+m + AMP + beta-nicotinamide D-nucleotide.. Its function is as follows. DNA ligase that catalyzes the formation of phosphodiester linkages between 5'-phosphoryl and 3'-hydroxyl groups in double-stranded DNA using NAD as a coenzyme and as the energy source for the reaction. It is essential for DNA replication and repair of damaged DNA. The chain is DNA ligase from Chromohalobacter salexigens (strain ATCC BAA-138 / DSM 3043 / CIP 106854 / NCIMB 13768 / 1H11).